Consider the following 250-residue polypeptide: Uridylate kinase (250 aa).

Residue 19-22 (KLSG) coordinates ATP. Residue glycine 61 coordinates UMP. The ATP site is built by glycine 62 and arginine 66. UMP is bound by residues aspartate 81 and 142 to 149 (TGNPFFTT). Residues threonine 169, glutamine 170, tyrosine 175, and aspartate 178 each coordinate ATP.

It belongs to the UMP kinase family. As to quaternary structure, homohexamer.

The protein resides in the cytoplasm. The catalysed reaction is UMP + ATP = UDP + ADP. It functions in the pathway pyrimidine metabolism; CTP biosynthesis via de novo pathway; UDP from UMP (UMPK route): step 1/1. Its activity is regulated as follows. Inhibited by UTP. Its function is as follows. Catalyzes the reversible phosphorylation of UMP to UDP. This is Uridylate kinase from Rhodospirillum rubrum (strain ATCC 11170 / ATH 1.1.1 / DSM 467 / LMG 4362 / NCIMB 8255 / S1).